We begin with the raw amino-acid sequence, 373 residues long: 3 beta-hydroxysteroid dehydrogenase/Delta 5--&gt;4-isomerase type 1 (373 aa).

Residues 10 to 15, Tyr155, and Lys159 each bind NADP(+); that span reads GAGGFL. The active-site Proton donor is Lys159. The chain crosses the membrane as a helical span at residues 288-308; that stretch reads LALMYWIGFLLEVVSFLLSPV.

Belongs to the 3-beta-HSD family. Adrenal glands, testes and ovaries.

It localises to the endoplasmic reticulum membrane. It is found in the mitochondrion membrane. The enzyme catalyses a 3beta-hydroxy-Delta(5)-steroid + NAD(+) = a 3-oxo-Delta(5)-steroid + NADH + H(+). The catalysed reaction is pregnenolone + NAD(+) = pregn-5-ene-3,20-dione + NADH + H(+). It catalyses the reaction 3beta-hydroxyandrost-5-en-17-one + NAD(+) = androst-5-ene-3,17-dione + NADH + H(+). It carries out the reaction androst-5-en-3beta,17beta-diol + NAD(+) = 17beta-hydroxy-androst-5-en-3-one + NADH + H(+). The enzyme catalyses a 3beta-hydroxysteroid + NADP(+) = a 3-oxosteroid + NADPH + H(+). The catalysed reaction is 5alpha-androstane-3beta,17beta-diol + NADP(+) = 17beta-hydroxy-5alpha-androstan-3-one + NADPH + H(+). It catalyses the reaction 3beta-hydroxy-5alpha-androstan-17-one + NADP(+) = 5alpha-androstan-3,17-dione + NADPH + H(+). It carries out the reaction a 3-oxo-Delta(5)-steroid = a 3-oxo-Delta(4)-steroid. The enzyme catalyses pregn-5-ene-3,20-dione = progesterone. The catalysed reaction is androst-5-ene-3,17-dione = androst-4-ene-3,17-dione. It catalyses the reaction 17beta-hydroxy-androst-5-en-3-one = testosterone. It carries out the reaction 5alpha-androstane-3beta,17beta-diol + NAD(+) = 17beta-hydroxy-5alpha-androstan-3-one + NADH + H(+). Its pathway is steroid hormone biosynthesis. It participates in steroid metabolism. Its function is as follows. A bifunctional enzyme responsible for the oxidation and isomerization of 3beta-hydroxy-Delta(5)-steroid precursors to 3-oxo-Delta(4)-steroids, an essential step in steroid hormone biosynthesis. Specifically catalyzes the conversion of pregnenolone to progesterone, 17alpha-hydroxypregnenolone to 17alpha-hydroxyprogesterone, dehydroepiandrosterone (DHEA) to 4-androstenedione and androstenediol to testosterone. Additionally, catalyzes the interconversion between 3beta-hydroxy and 3-oxo-5alpha-androstane steroids controlling the bioavalability of the active forms. Specifically converts dihydrotestosterone to its inactive form 5alpha-androstanediol, that does not bind androgen receptor/AR. Also converts androstanedione, a precursor of testosterone and estrone, to epiandrosterone. Expected to use NAD(+) as preferred electron donor for the 3beta-hydroxy-steroid dehydrogenase activity and NADPH for the 3-ketosteroid reductase activity. This Macaca mulatta (Rhesus macaque) protein is 3 beta-hydroxysteroid dehydrogenase/Delta 5--&gt;4-isomerase type 1 (HSD3B1).